A 264-amino-acid chain; its full sequence is Formamidopyrimidine-DNA glycosylase (264 aa).

Pro-2 serves as the catalytic Schiff-base intermediate with DNA. The Proton donor role is filled by Glu-3. The Proton donor; for beta-elimination activity role is filled by Lys-58. His-89, Arg-107, and Arg-144 together coordinate DNA. Residues 229–263 (RVYQRTGEPCLNCKTPIRRVIVTQRSSHFCPHCQK) form an FPG-type zinc finger. Residue Arg-253 is the Proton donor; for delta-elimination activity of the active site.

This sequence belongs to the FPG family. In terms of assembly, monomer. Zn(2+) serves as cofactor.

It carries out the reaction Hydrolysis of DNA containing ring-opened 7-methylguanine residues, releasing 2,6-diamino-4-hydroxy-5-(N-methyl)formamidopyrimidine.. The catalysed reaction is 2'-deoxyribonucleotide-(2'-deoxyribose 5'-phosphate)-2'-deoxyribonucleotide-DNA = a 3'-end 2'-deoxyribonucleotide-(2,3-dehydro-2,3-deoxyribose 5'-phosphate)-DNA + a 5'-end 5'-phospho-2'-deoxyribonucleoside-DNA + H(+). In terms of biological role, involved in base excision repair of DNA damaged by oxidation or by mutagenic agents. Acts as a DNA glycosylase that recognizes and removes damaged bases. Has a preference for oxidized purines, such as 7,8-dihydro-8-oxoguanine (8-oxoG). Has AP (apurinic/apyrimidinic) lyase activity and introduces nicks in the DNA strand. Cleaves the DNA backbone by beta-delta elimination to generate a single-strand break at the site of the removed base with both 3'- and 5'-phosphates. The chain is Formamidopyrimidine-DNA glycosylase from Solibacter usitatus (strain Ellin6076).